A 31-amino-acid polypeptide reads, in one-letter code: Cytochrome b6-f complex subunit 6 (31 aa).

The helical transmembrane segment at 4–24 (ITSYFGFLLAVLTITSALFIG) threads the bilayer.

It belongs to the PetL family. The 4 large subunits of the cytochrome b6-f complex are cytochrome b6, subunit IV (17 kDa polypeptide, PetD), cytochrome f and the Rieske protein, while the 4 small subunits are PetG, PetL, PetM and PetN. The complex functions as a dimer.

It localises to the plastid. It is found in the chloroplast thylakoid membrane. In terms of biological role, component of the cytochrome b6-f complex, which mediates electron transfer between photosystem II (PSII) and photosystem I (PSI), cyclic electron flow around PSI, and state transitions. PetL is important for photoautotrophic growth as well as for electron transfer efficiency and stability of the cytochrome b6-f complex. This Cucumis sativus (Cucumber) protein is Cytochrome b6-f complex subunit 6.